The sequence spans 192 residues: Intraflagellar transport protein 22 (192 aa).

Residues 12–19 (GPQRTGKT) and 62–69 (WDVSGSVQ) each bind GTP.

Belongs to the small GTPase superfamily. Rab family. Component of the IFT complex B, composed of IFT88, IFT70, IFT52, IFT46, IFT27, IFT25 and IFT22.

It localises to the cell projection. It is found in the cilium. The protein resides in the flagellum. Its function is as follows. Component of the intraflagellar transport (IFT) complex B. Functions in regulating the cellular pool size of both complex A and complex B and thus plays a critical role in determining the cellular availability of IFT particles. This chain is Intraflagellar transport protein 22 (FAP9), found in Chlamydomonas reinhardtii (Chlamydomonas smithii).